Reading from the N-terminus, the 153-residue chain is 3-hydroxyacyl-[acyl-carrier-protein] dehydratase FabZ (153 aa).

Residue His47 is part of the active site.

This sequence belongs to the thioester dehydratase family. FabZ subfamily.

It is found in the cytoplasm. The catalysed reaction is a (3R)-hydroxyacyl-[ACP] = a (2E)-enoyl-[ACP] + H2O. Involved in unsaturated fatty acids biosynthesis. Catalyzes the dehydration of short chain beta-hydroxyacyl-ACPs and long chain saturated and unsaturated beta-hydroxyacyl-ACPs. In Myxococcus xanthus (strain DK1622), this protein is 3-hydroxyacyl-[acyl-carrier-protein] dehydratase FabZ.